A 305-amino-acid chain; its full sequence is MKKIIFMGTPSYATCILKALVENENFKLVALFTQPDKAVGRKQILTPSDTKAFLSQNYPSIPIFTPSSLKDENIIREIKDLNPDFIVVAAYGKILPKAILDLAPCVNLHASLLPKYRGASPIQSAILNKDEKSGVCTMLMEEGLDTGAVLESLECDIKDKNSSEVFELLANLAAKLILSTLLNFDKIIPKKQEESLATLCRKIKKEDGLINLQNARELYQKYLAFTPWPGVFLENGLKFLELELVDELKQNARMGEILELEKESFLLACKQGVLRIKKLQESGKKALDGRTYLNGKRLKSEDSLC.

111–114 is a (6S)-5,6,7,8-tetrahydrofolate binding site; it reads SLLP.

Belongs to the Fmt family.

It carries out the reaction L-methionyl-tRNA(fMet) + (6R)-10-formyltetrahydrofolate = N-formyl-L-methionyl-tRNA(fMet) + (6S)-5,6,7,8-tetrahydrofolate + H(+). Functionally, attaches a formyl group to the free amino group of methionyl-tRNA(fMet). The formyl group appears to play a dual role in the initiator identity of N-formylmethionyl-tRNA by promoting its recognition by IF2 and preventing the misappropriation of this tRNA by the elongation apparatus. The sequence is that of Methionyl-tRNA formyltransferase from Campylobacter jejuni subsp. jejuni serotype O:6 (strain 81116 / NCTC 11828).